We begin with the raw amino-acid sequence, 428 residues long: tRNA(Ile)-lysidine synthase (428 aa).

Ser28–Ser33 contributes to the ATP binding site.

The protein belongs to the tRNA(Ile)-lysidine synthase family.

The protein localises to the cytoplasm. It carries out the reaction cytidine(34) in tRNA(Ile2) + L-lysine + ATP = lysidine(34) in tRNA(Ile2) + AMP + diphosphate + H(+). Its function is as follows. Ligates lysine onto the cytidine present at position 34 of the AUA codon-specific tRNA(Ile) that contains the anticodon CAU, in an ATP-dependent manner. Cytidine is converted to lysidine, thus changing the amino acid specificity of the tRNA from methionine to isoleucine. The sequence is that of tRNA(Ile)-lysidine synthase from Streptococcus pyogenes serotype M6 (strain ATCC BAA-946 / MGAS10394).